A 323-amino-acid chain; its full sequence is Quinolinate synthase (323 aa).

Iminosuccinate is bound by residues His39 and Ser56. Cys101 contributes to the [4Fe-4S] cluster binding site. Residues Tyr127–Asn129 and Ser144 contribute to the iminosuccinate site. Cys187 serves as a coordination point for [4Fe-4S] cluster. Iminosuccinate-binding positions include His213–Glu215 and Thr230. Cys280 serves as a coordination point for [4Fe-4S] cluster.

It belongs to the quinolinate synthase family. Type 2 subfamily. [4Fe-4S] cluster serves as cofactor.

The protein resides in the cytoplasm. The catalysed reaction is iminosuccinate + dihydroxyacetone phosphate = quinolinate + phosphate + 2 H2O + H(+). It functions in the pathway cofactor biosynthesis; NAD(+) biosynthesis; quinolinate from iminoaspartate: step 1/1. Its function is as follows. Catalyzes the condensation of iminoaspartate with dihydroxyacetone phosphate to form quinolinate. This Chlorobium phaeobacteroides (strain DSM 266 / SMG 266 / 2430) protein is Quinolinate synthase.